We begin with the raw amino-acid sequence, 399 residues long: MEPAGLCGFCPAGEALPARYTCPRCNAPYCSLRCYRAHGACAEDFYRDQVLRELRGRSASPSRLAGALRRLREQREAEDEPEEAGLGPGARPGGLSGLWERLTPAEKAAFERLLSRGEAGRLLPPWRPWWWGRGTGPRLLEELDHAANRDLAEPEPAPARTALQSGDDAAAAEPFAEDSCAARPLALPARIPALASLSRSPASPLVRFQLPNVLFAYAHTLALYHGGDDDALLSDFCATLLDVSGALGAQQVFGSTEEALQAAAHVLEAGEHPPGPLGTRGAMQEVARILLGEGPVNQKGYTLTALGHLAQTLGRARKQAVIGGERDRLYRARKKCQFLLAWTNENEAALTPLALDCARAHRAHAVTAEEMATLTGELERLWGGPVPPTPRTLIEELPG.

Met-1 is subject to N-acetylmethionine. Zn(2+) contacts are provided by Cys-7, Cys-10, Cys-22, Cys-25, Cys-30, Cys-34, His-38, and Cys-41. The HIT-type zinc finger occupies 7–41 (CGFCPAGEALPARYTCPRCNAPYCSLRCYRAHGAC). Disordered stretches follow at residues 70–97 (RLRE…GLSG) and 152–175 (AEPE…AEPF). A compositionally biased stretch (gly residues) spans 86–96 (LGPGARPGGLS). Thr-161 bears the Phosphothreonine mark.

As to quaternary structure, interacts (via HIT-type zinc finger) with RUVBL2 in the presence of ATP or ADP; shows a stronger interaction in the presence of ADP. Low expression in most tissues; highly expressed in testis; particularly in seminiferous tubules.

In terms of biological role, may act as a bridging factor mediating the interaction between the R2TP/Prefoldin-like (R2TP/PFDL) complex and U5 small nuclear ribonucleoprotein (U5 snRNP). Required for the interaction of R2TP complex subunit RPAP3 and prefoldin-like subunit URI1 with U5 snRNP proteins EFTUD2 and PRPF8. May play a role in regulating the composition of the U5 snRNP complex. The polypeptide is Zinc finger HIT domain-containing protein 2 (Znhit2) (Mus musculus (Mouse)).